The primary structure comprises 292 residues: Ribosomal protein L11 methyltransferase (292 aa).

Residues Thr144, Gly165, Asp187, and Asn229 each coordinate S-adenosyl-L-methionine.

The protein belongs to the methyltransferase superfamily. PrmA family.

It is found in the cytoplasm. The catalysed reaction is L-lysyl-[protein] + 3 S-adenosyl-L-methionine = N(6),N(6),N(6)-trimethyl-L-lysyl-[protein] + 3 S-adenosyl-L-homocysteine + 3 H(+). In terms of biological role, methylates ribosomal protein L11. This chain is Ribosomal protein L11 methyltransferase, found in Pseudomonas putida (strain GB-1).